Consider the following 91-residue polypeptide: Small ribosomal subunit protein uS19 (91 aa).

Belongs to the universal ribosomal protein uS19 family.

Functionally, protein S19 forms a complex with S13 that binds strongly to the 16S ribosomal RNA. The sequence is that of Small ribosomal subunit protein uS19 from Saccharophagus degradans (strain 2-40 / ATCC 43961 / DSM 17024).